Reading from the N-terminus, the 156-residue chain is FAD synthase (156 aa).

ATP contacts are provided by residues 16–17 (TF), 21–24 (HPGH), Asp101, and Tyr129.

The protein belongs to the archaeal FAD synthase family. Homodimer. A divalent metal cation is required as a cofactor.

It carries out the reaction FMN + ATP + H(+) = FAD + diphosphate. It functions in the pathway cofactor biosynthesis; FAD biosynthesis; FAD from FMN: step 1/1. Its function is as follows. Catalyzes the transfer of the AMP portion of ATP to flavin mononucleotide (FMN) to produce flavin adenine dinucleotide (FAD) coenzyme. The chain is FAD synthase from Methanococcus aeolicus (strain ATCC BAA-1280 / DSM 17508 / OCM 812 / Nankai-3).